A 460-amino-acid chain; its full sequence is Glycine--tRNA ligase (460 aa).

Residues Arg99 and Glu162 each contribute to the substrate site. ATP-binding positions include 194–196 (RNE), 204–209 (FRTREF), 281–282 (EL), and 325–328 (GVGR). 209–213 (FEQME) lines the substrate pocket. 321–325 (EPAAG) contributes to the substrate binding site.

The protein belongs to the class-II aminoacyl-tRNA synthetase family. As to quaternary structure, homodimer.

Its subcellular location is the cytoplasm. The catalysed reaction is tRNA(Gly) + glycine + ATP = glycyl-tRNA(Gly) + AMP + diphosphate. Its function is as follows. Catalyzes the attachment of glycine to tRNA(Gly). The chain is Glycine--tRNA ligase from Streptomyces coelicolor (strain ATCC BAA-471 / A3(2) / M145).